Consider the following 293-residue polypeptide: MDIALAIKALILGIVEGLTEFLPISSTGHLILAGQLLDFNDEKGKIFEIVIQFGAILAVCWEFRHKIIDVIKGLPNDPRQQRFAINVIVATIPAITLALIFGKAIKAHLFNPIVVASAFILGGFVILWAEWRERHRGETHDPRANALLEAAKAGAPRIETLDDLRISDAIKVGFAQCFALIPGTSRSGSTIIGGLLFGLSRKVATEFSFFLAIPVIFGATVYELYKSRALLSADDLSIFAVGFVAAFISAFFCVRWLLKFIATHDFRGFAWYRIIFGIIVLATAYTHLIAWQA.

7 helical membrane-spanning segments follow: residues 3–23 (IALA…EFLP), 43–63 (KGKI…CWEF), 85–105 (INVI…GKAI), 109–129 (LFNP…ILWA), 203–223 (VATE…TVYE), 238–258 (IFAV…RWLL), and 269–289 (FAWY…THLI).

The protein belongs to the UppP family.

The protein localises to the cell inner membrane. It carries out the reaction di-trans,octa-cis-undecaprenyl diphosphate + H2O = di-trans,octa-cis-undecaprenyl phosphate + phosphate + H(+). Catalyzes the dephosphorylation of undecaprenyl diphosphate (UPP). Confers resistance to bacitracin. The polypeptide is Undecaprenyl-diphosphatase (Ralstonia pickettii (strain 12J)).